A 166-amino-acid polypeptide reads, in one-letter code: Large ribosomal subunit protein uL10 (166 aa).

The protein belongs to the universal ribosomal protein uL10 family. In terms of assembly, part of the ribosomal stalk of the 50S ribosomal subunit. The N-terminus interacts with L11 and the large rRNA to form the base of the stalk. The C-terminus forms an elongated spine to which L12 dimers bind in a sequential fashion forming a multimeric L10(L12)X complex.

In terms of biological role, forms part of the ribosomal stalk, playing a central role in the interaction of the ribosome with GTP-bound translation factors. The chain is Large ribosomal subunit protein uL10 from Tropheryma whipplei (strain TW08/27) (Whipple's bacillus).